A 355-amino-acid polypeptide reads, in one-letter code: Serine acetyltransferase 4 (355 aa).

Belongs to the transferase hexapeptide repeat family. As to quaternary structure, homomultimer. Localized in vascular tissues, particularly in phloem.

It localises to the cytoplasm. It carries out the reaction L-serine + acetyl-CoA = O-acetyl-L-serine + CoA. It participates in amino-acid biosynthesis; L-cysteine biosynthesis; L-cysteine from L-serine: step 1/2. Feedback inhibitions by L-Ser and acetyl-CoA. The chain is Serine acetyltransferase 4 from Arabidopsis thaliana (Mouse-ear cress).